Consider the following 415-residue polypeptide: MSTGTVTIDRLGAQGDGVARTEAGPVFAPFTLPGETVSLAVNKANGTLISLKEASPERVEPPCRHFGPDGVNGTCGGCTLQHASDALYHAFKRNLVIDALRSKGLTPEVGALIIARPGDRRRAAFTARRTEKELLLGYNQMQSHHIVSIGECPITSPGIVSRLATIRKIAAAMASSAEPFRITVLETDTGLDLAFEGLKLSDPQRRSAVDAVLGERGIARVSLNGEIVVEPLKPAIDFDGVTVSPPPGAFTQATRPAEDAMAKLVLAHVGKAKRVADLFAGIGTFALRIARTARVHAVEGDDRAVKALDFAARNTQGLKPVTAEKRDLFRRPMMAQELKAFDAVVFDPPRAGAETQCHELARSGVKKIAAVSCNPVTLARDLSILTAAGYRITGVTPIDQFLWSAHVETVATLEK.

Residues 1-55 (MSTGTVTIDRLGAQGDGVARTEAGPVFAPFTLPGETVSLAVNKANGTLISLKEAS) enclose the TRAM domain. 4 residues coordinate [4Fe-4S] cluster: C63, C75, C78, and C152. Positions 252, 279, 299, and 347 each coordinate S-adenosyl-L-methionine. Catalysis depends on C373, which acts as the Nucleophile.

The protein belongs to the class I-like SAM-binding methyltransferase superfamily. RNA M5U methyltransferase family.

This is an uncharacterized protein from Rhizobium meliloti (strain 1021) (Ensifer meliloti).